We begin with the raw amino-acid sequence, 906 residues long: Protein translocase subunit SecA (906 aa).

Residues Q87, 105-109, and D507 contribute to the ATP site; that span reads GEGKT. Zn(2+) contacts are provided by C890, C892, C901, and H902.

The protein belongs to the SecA family. Monomer and homodimer. Part of the essential Sec protein translocation apparatus which comprises SecA, SecYEG and auxiliary proteins SecDF-YajC and YidC. Zn(2+) serves as cofactor.

The protein localises to the cell inner membrane. It localises to the cytoplasm. The catalysed reaction is ATP + H2O + cellular proteinSide 1 = ADP + phosphate + cellular proteinSide 2.. In terms of biological role, part of the Sec protein translocase complex. Interacts with the SecYEG preprotein conducting channel. Has a central role in coupling the hydrolysis of ATP to the transfer of proteins into and across the cell membrane, serving both as a receptor for the preprotein-SecB complex and as an ATP-driven molecular motor driving the stepwise translocation of polypeptide chains across the membrane. The sequence is that of Protein translocase subunit SecA from Thiobacillus denitrificans (strain ATCC 25259 / T1).